The primary structure comprises 570 residues: Probable metalloreductase AIM14 (570 aa).

7 helical membrane-spanning segments follow: residues 21–41, 70–90, 101–118, 142–162, 177–197, 204–224, and 230–250; these read IKYG…LALL, AIHL…HYSL, LGRL…LTLR, IITV…AIDD, FVGF…IGPM, LFYI…PIHS, and FPFL…RIVF. The Ferric oxidoreductase domain maps to 101–219; it reads LGRLSYALIP…NLVNVAFILL (119 aa). An FAD-binding FR-type domain is found at 250-388; the sequence is FAKSLMILNK…GGSGISFALP (139 aa). Over residues 481 to 505 the composition is skewed to polar residues; sequence SNFNSENADSNDNTPETSHSPTKEN. The segment at 481–507 is disordered; sequence SNFNSENADSNDNTPETSHSPTKENGS.

This sequence belongs to the ferric reductase (FRE) family. AIM14 subfamily. In terms of assembly, interacts with ribosomes.

It localises to the membrane. Its function is as follows. Probable cell surface metalloreductase. May be involved in iron or copper homeostasis. The sequence is that of Probable metalloreductase AIM14 (AIM14) from Saccharomyces cerevisiae (strain YJM789) (Baker's yeast).